A 473-amino-acid chain; its full sequence is Glutamate--tRNA ligase (473 aa).

The short motif at 11–21 (PSPTGFLHIGG) is the 'HIGH' region element. Positions 240–244 (KLSKR) match the 'KMSKS' region motif. Lys-243 is an ATP binding site.

It belongs to the class-I aminoacyl-tRNA synthetase family. Glutamate--tRNA ligase type 1 subfamily. Monomer.

It localises to the cytoplasm. It carries out the reaction tRNA(Glu) + L-glutamate + ATP = L-glutamyl-tRNA(Glu) + AMP + diphosphate. In terms of biological role, catalyzes the attachment of glutamate to tRNA(Glu) in a two-step reaction: glutamate is first activated by ATP to form Glu-AMP and then transferred to the acceptor end of tRNA(Glu). This chain is Glutamate--tRNA ligase, found in Rhodopseudomonas palustris (strain BisB5).